The chain runs to 932 residues: Protein translocase subunit SecA, chloroplastic (932 aa).

Residue 95 to 102 (MRTGEGKT) coordinates ATP. Over residues 632-641 (HESRRVDNQL) the composition is skewed to basic and acidic residues. The tract at residues 632-653 (HESRRVDNQLRGRSGRQGDPGS) is disordered.

It belongs to the SecA family.

The protein localises to the plastid. It is found in the chloroplast stroma. The protein resides in the chloroplast thylakoid membrane. The catalysed reaction is ATP + H2O + chloroplast-proteinSide 1 = ADP + phosphate + chloroplast-proteinSide 2.. Functionally, has a central role in coupling the hydrolysis of ATP to the transfer of proteins across the thylakoid membrane. In Ostreococcus lucimarinus (strain CCE9901), this protein is Protein translocase subunit SecA, chloroplastic.